The sequence spans 166 residues: UPF0303 protein Avin_29320 (166 aa).

This sequence belongs to the UPF0303 family.

The polypeptide is UPF0303 protein Avin_29320 (Azotobacter vinelandii (strain DJ / ATCC BAA-1303)).